The following is a 104-amino-acid chain: Phosphoribosyl-ATP pyrophosphatase (104 aa).

This sequence belongs to the PRA-PH family.

The protein resides in the cytoplasm. It catalyses the reaction 1-(5-phospho-beta-D-ribosyl)-ATP + H2O = 1-(5-phospho-beta-D-ribosyl)-5'-AMP + diphosphate + H(+). It participates in amino-acid biosynthesis; L-histidine biosynthesis; L-histidine from 5-phospho-alpha-D-ribose 1-diphosphate: step 2/9. In Streptococcus sanguinis (strain SK36), this protein is Phosphoribosyl-ATP pyrophosphatase.